Consider the following 330-residue polypeptide: Polygalacturonase inhibitor 2 (330 aa).

Residues 1-21 form the signal peptide; sequence MDKTMTLFLLLSTLLLTTSLA. Cystine bridges form between cysteine 25/cysteine 55 and cysteine 56/cysteine 63. LRR repeat units follow at residues 69 to 93, 94 to 117, 118 to 141, 142 to 166, 167 to 192, 194 to 215, 217 to 237, 238 to 260, 261 to 285, and 287 to 308; these read NHRV…VGDL, PYLT…TIAK, LKNL…FLSQ, LKNL…LSSL, RKLE…TFSG, VPSL…LGNP, FYRI…LFGA, KKTT…KVKL, AKTL…WSKA, and FQLL…EYIQ. N-linked (GlcNAc...) asparagine glycosylation is found at asparagine 106, asparagine 120, and asparagine 130. The N-linked (GlcNAc...) asparagine glycan is linked to asparagine 291. 2 disulfides stabilise this stretch: cysteine 298/cysteine 320 and cysteine 322/cysteine 329.

This sequence belongs to the polygalacturonase-inhibiting protein family.

It localises to the secreted. The protein resides in the cell wall. It is found in the membrane. Inhibitor of fungal polygalacturonase. It is an important factor for plant resistance to phytopathogenic fungi. This Arabidopsis thaliana (Mouse-ear cress) protein is Polygalacturonase inhibitor 2 (PGIP2).